The primary structure comprises 318 residues: Aspartate carbamoyltransferase catalytic subunit (318 aa).

Carbamoyl phosphate is bound by residues Arg-58 and Thr-59. Lys-86 contacts L-aspartate. The carbamoyl phosphate site is built by Arg-108, His-141, and Gln-144. Arg-174 and Arg-226 together coordinate L-aspartate. 2 residues coordinate carbamoyl phosphate: Gly-270 and Pro-271.

The protein belongs to the aspartate/ornithine carbamoyltransferase superfamily. ATCase family. Heterododecamer (2C3:3R2) of six catalytic PyrB chains organized as two trimers (C3), and six regulatory PyrI chains organized as three dimers (R2).

It carries out the reaction carbamoyl phosphate + L-aspartate = N-carbamoyl-L-aspartate + phosphate + H(+). Its pathway is pyrimidine metabolism; UMP biosynthesis via de novo pathway; (S)-dihydroorotate from bicarbonate: step 2/3. Catalyzes the condensation of carbamoyl phosphate and aspartate to form carbamoyl aspartate and inorganic phosphate, the committed step in the de novo pyrimidine nucleotide biosynthesis pathway. In Lactobacillus acidophilus (strain ATCC 700396 / NCK56 / N2 / NCFM), this protein is Aspartate carbamoyltransferase catalytic subunit.